Consider the following 838-residue polypeptide: MAKRLVLFVAVVVALVALTVAEGEASEQLQCERELQELQERELKACQQVMDQQLRDISPECHPVVVSPVAGQYEQQIVVPKGGSFYPGETTPPQQLQQRIFWGIPALLKRYYPSVTSPQQVSYYPGQASPQRPGQGQQPGQGQQSGQGQQGYYPTSPQQPGQWQQPEQGQPGYYPTSPQQPGQLQQPAQGQQPGQGQQGRQPGQGQPGYYPTSSQLQPGQLQQPAQGQQGQQPGQGQQGQQPGQGQQPGQGQQGQQPGQGQQPGQGQQGQQLGQGQQGYYPTSLQQSGQGQPGYYPTSLQQLGQGQSGYYPTSPQQPGQGQQPGQLQQPAQGQQPEQGQQGQQPGQGQQGQQPGQGQQPGQGQPGYYPTSPQQSGQGQPGYYPTSSQQPTQSQQPGQGQQGQQVGQGQQAQQPGQGQQPGQGQPGYYPTSPLQSGQGQPGYYLTSPQQSGQGQQPGQLQQSAQGQKGQQPGQGQQPGQGQQGQQPGQGQQGQQPGQGQPGYYPTSPQQSGQGQQPGQWQQPGQGQPGYYPTSPLQPGQGQPGYDPTSPQQPGQGQQPGQLQQPAQGQQGQQLAQGQQGQQPAQVQQGQQPAQGQQGQQLGQGQQGQQPGQGQQPAQGQQGQQPGQGQQGQQPGQGQQPGQGQPWYYPTSPQESGQGQQPGQWQQPGQWQQPGQGQPGYYLTSPLQLGQGQQGYYPTSLQQPGQGQQPGQWQQSGQGQHGYYPTSPQLSGQGQRPGQWLQPGQGQQGYYPTSPQQSGQGQQLGQWLQPGQGQQGYYPTSLQQTGQGQQSGQGQQGYYSSYHVSVEHQAASLKVAKAQQLAAQLPAMCRLEGGDALSASQ.

The N-terminal stretch at 1–21 is a signal peptide; sequence MAKRLVLFVAVVVALVALTVA. The interval 122–794 is disordered; it reads SYYPGQASPQ…GQQSGQGQQG (673 aa). A compositionally biased stretch (low complexity) spans 125 to 136; that stretch reads PGQASPQRPGQG. The span at 137–149 shows a compositional bias: gly residues; it reads QQPGQGQQSGQGQ. 12 stretches are compositionally biased toward low complexity: residues 150–172, 179–208, 215–245, 268–308, 315–356, 364–416, 445–473, 481–532, 549–643, 654–677, 699–719, and 729–773; these read QGYY…GQPG, QQPG…GQPG, QLQP…PGQG, QGQQ…GQSG, QQPG…PGQG, PGYY…PGQG, SPQQ…PGQG, QGQQ…YPTS, QQPG…QGQP, GQGQ…GQPG, QQPG…GQHG, and GQGQ…GQQG.

It belongs to the gliadin/glutenin family. Disulfide-bridge linked aggregates.

Its function is as follows. Glutenins are high-molecular weight seed storage proteins of wheat endosperm. Thought to be responsible for the visco-elastic property of wheat dough. The polypeptide is Glutenin, high molecular weight subunit PW212 (Triticum aestivum (Wheat)).